Here is a 466-residue protein sequence, read N- to C-terminus: Asparagine--tRNA ligase (466 aa).

This sequence belongs to the class-II aminoacyl-tRNA synthetase family. Homodimer.

Its subcellular location is the cytoplasm. It carries out the reaction tRNA(Asn) + L-asparagine + ATP = L-asparaginyl-tRNA(Asn) + AMP + diphosphate + H(+). The sequence is that of Asparagine--tRNA ligase from Aliivibrio fischeri (strain ATCC 700601 / ES114) (Vibrio fischeri).